Consider the following 647-residue polypeptide: 1-deoxy-D-xylulose-5-phosphate synthase (647 aa).

Residues H88 and 129 to 131 contribute to the thiamine diphosphate site; that span reads GHA. Position 160 (D160) interacts with Mg(2+). Residues 161–162, N189, Y300, and E377 contribute to the thiamine diphosphate site; that span reads GA. Residue N189 coordinates Mg(2+).

Belongs to the transketolase family. DXPS subfamily. Homodimer. Mg(2+) is required as a cofactor. Requires thiamine diphosphate as cofactor.

It carries out the reaction D-glyceraldehyde 3-phosphate + pyruvate + H(+) = 1-deoxy-D-xylulose 5-phosphate + CO2. Its pathway is metabolic intermediate biosynthesis; 1-deoxy-D-xylulose 5-phosphate biosynthesis; 1-deoxy-D-xylulose 5-phosphate from D-glyceraldehyde 3-phosphate and pyruvate: step 1/1. Catalyzes the acyloin condensation reaction between C atoms 2 and 3 of pyruvate and glyceraldehyde 3-phosphate to yield 1-deoxy-D-xylulose-5-phosphate (DXP). The chain is 1-deoxy-D-xylulose-5-phosphate synthase from Dehalococcoides mccartyi (strain CBDB1).